Reading from the N-terminus, the 578-residue chain is GTP diphosphokinase CRSH3, chloroplastic (578 aa).

The transit peptide at 1-45 directs the protein to the chloroplast; sequence MANAGVNETVAVAVAIDAPGVGHDHGAAGEVRRPSTRRLAPAGSG. Residues 99–199 form the HD domain; sequence SVSRALVVAA…LELAVKLDAM (101 aa). EF-hand domains lie at 468–503 and 506–537; these read ATAG…LGAG and DAEE…VKLK. Residues aspartate 481, asparagine 483, aspartate 485, arginine 487, glutamate 492, aspartate 515, asparagine 517, aspartate 519, serine 521, and glutamate 526 each coordinate Ca(2+).

This sequence belongs to the RelA/SpoT family. Expressed in roots and shoots.

The protein localises to the plastid. Its subcellular location is the chloroplast. It carries out the reaction GTP + ATP = guanosine 3'-diphosphate 5'-triphosphate + AMP. Activated by calcium. Possesses calcium-dependent ppGpp (guanosine 3'-diphosphate 5'-diphosphate) synthetase activity in vitro and is able to functionally complement E.coli relA mutants. May be involved in a rapid plant ppGpp-mediated response to pathogens and other stresses. This chain is GTP diphosphokinase CRSH3, chloroplastic, found in Oryza sativa subsp. japonica (Rice).